A 272-amino-acid polypeptide reads, in one-letter code: Testis-specific gene 13 protein (272 aa).

This Bos taurus (Bovine) protein is Testis-specific gene 13 protein (TSGA13).